A 794-amino-acid polypeptide reads, in one-letter code: Signal transducer and activator of transcription 5A (794 aa).

Tyr-90 is modified (phosphotyrosine). Ser-128 and Ser-193 each carry phosphoserine. One can recognise an SH2 domain in the interval 589-686; the sequence is WNDGAILGFV…EVFSKYYTPV (98 aa). At Tyr-682 the chain carries Phosphotyrosine. Tyr-694 is subject to Phosphotyrosine; by JAK2. The disordered stretch occupies residues 773–794; sequence DSLDSRLSPPAGLFTSARGSLS. Residue Ser-780 is modified to Phosphoserine.

The protein belongs to the transcription factor STAT family. As to quaternary structure, forms a homodimer or a heterodimer with a related family member. Binds NR3C1. Interacts with NCOA1 and SOCS7. Interacts with ERBB4. Interacts with EBF4. Interacts with CD69. In terms of processing, tyrosine phosphorylated in response to KITLG/SCF, IL2, IL3, IL7, IL15, CSF2/GMCSF, GH1, PRL, EPO and THPO. Activated KIT promotes phosphorylation on tyrosine residues and subsequent translocation to the nucleus. Tyrosine phosphorylated in response to constitutively activated FGFR1, FGFR2, FGFR3 and FGFR4. Tyrosine phosphorylation is required for DNA-binding activity and dimerization. Serine phosphorylation is also required for maximal transcriptional activity. Tyrosine phosphorylated in response to signaling via activated FLT3; wild-type FLT3 results in much weaker phosphorylation than constitutively activated mutant FLT3. Alternatively, can be phosphorylated by JAK2 at Tyr-694. Post-translationally, ISGylated.

The protein localises to the cytoplasm. The protein resides in the nucleus. In terms of biological role, carries out a dual function: signal transduction and activation of transcription. Mediates cellular responses to the cytokine KITLG/SCF and other growth factors. Mediates cellular responses to ERBB4. May mediate cellular responses to activated FGFR1, FGFR2, FGFR3 and FGFR4. Binds to the GAS element and activates PRL-induced transcription. Regulates the expression of milk proteins during lactation. The sequence is that of Signal transducer and activator of transcription 5A (STAT5A) from Homo sapiens (Human).